The primary structure comprises 395 residues: MEKKNLLNVIKKVSFSLFIVIIYVMGLYIPLPFAEGTKQYMEAVKNTPISILGAFSGANFTRISIFSIGLNPLMFSMLIIQLLSFTHSFGFDALSPKQVQYLMQFLTMIITIIQAALLVFAFTNRRNGLEDFEMILILSAGSCLVVWLCYRNMKYGVGASAPVILTSILNGAIPNIISNVKLLLTMKYAWIWLAALAIFILLLIKFWLAFTKAYYPLKVVNPSLPASSNLMTVPLGLNMAAMMMYMVGMAILTLPLMVGRYFSSSSLINNWVFQASFSAVMGILIFYFFTFVNFDPKEQAKSFRNNHYYIPNIAPGRPTQRYLNRLIWIIAFPGAVLNAFQLVFGLYGGNFLGNYAGFAIIPMNVVMITMFMGGIKDQIDTILFPYRYDRLLKDN.

The next 10 membrane-spanning stretches (helical) occupy residues 13–33, 63–83, 102–122, 128–148, 157–177, 190–210, 239–259, 272–292, 326–346, and 355–375; these read VSFSLFIVIIYVMGLYIPLPF, ISIFSIGLNPLMFSMLIIQLL, LMQFLTMIITIIQAALLVFAF, GLEDFEMILILSAGSCLVVWL, VGASAPVILTSILNGAIPNII, WIWLAALAIFILLLIKFWLAF, MAAMMMYMVGMAILTLPLMVG, VFQASFSAVMGILIFYFFTFV, LIWIIAFPGAVLNAFQLVFGL, and YAGFAIIPMNVVMITMFMGGI.

Belongs to the SecY/SEC61-alpha family. SecY2 subfamily. As to quaternary structure, component of the accessory SecA2/SecY2 protein translocase complex required to export cell wall proteins. May form heterotrimers with SecE and SecG subunits.

It is found in the cell membrane. Functionally, part of the accessory SecA2/SecY2 system specifically required for export of possible cell wall proteins. The central subunit of a protein translocation channel. This chain is Accessory Sec system protein translocase subunit SecY2, found in Lactobacillus johnsonii (strain CNCM I-12250 / La1 / NCC 533).